The primary structure comprises 440 residues: MTKRQPLYKSLYVQVLVAITIGILLGHYYPETGVALKPLGDGFVKLIKMVIAPIIFCTVVSGIAGMQSMKSVGKTGGYALLYFEIVSTIALIIGLVVVNVVQPGAGMHVDVSTLNASSVAAYAAAGAQQTTVGFLLNVIPNTVVGAFANGDILQVLMFSVLFGFALHRLGSYGKPVLDLIDRFAHVMFNIINMIMKLAPIGAFGAMAFTIGQYGVGSLVQLGYLMACFYITCILFVLVVLGGICRAHGFSVIKLIRYIREELLIVLGTSSSESALPRMLAKMERLGAKKSVVGLVIPTGYSFNLDGTSIYLTMAAVFIAQATDTTMDITHQITLLLVLLVASKGAAGVTGSGFIVLAATLSAVGHLPVAGLALILGIDRFMSEARALTNLIGNAVATVVVAKWVKELDTDQLQAELASGGSPLVDTRPTDDLGVAEGPAR.

Helical transmembrane passes span 15 to 35, 46 to 66, 78 to 98, 146 to 166, 190 to 210, 224 to 244, 291 to 311, 332 to 352, and 354 to 374; these read VLVAITIGILLGHYYPETGVA, LIKMVIAPIIFCTVVSGIAGM, YALLYFEIVSTIALIIGLVVV, AFANGDILQVLMFSVLFGFAL, IINMIMKLAPIGAFGAMAFTI, LMACFYITCILFVLVVLGGIC, VVGLVIPTGYSFNLDGTSIYL, ITLLLVLLVASKGAAGVTGSG, and IVLAATLSAVGHLPVAGLALI. Residues 419 to 440 form a disordered region; it reads GGSPLVDTRPTDDLGVAEGPAR.

Belongs to the dicarboxylate/amino acid:cation symporter (DAACS) (TC 2.A.23) family.

Its subcellular location is the cell inner membrane. Its function is as follows. Responsible for the transport of dicarboxylates such as succinate, fumarate, and malate from the periplasm across the membrane. The polypeptide is C4-dicarboxylate transport protein (Pseudomonas entomophila (strain L48)).